The following is a 332-amino-acid chain: L-lactate dehydrogenase C chain (332 aa).

NAD(+) is bound by residues 29-57 (GAVG…AVDK) and arginine 99. 3 residues coordinate substrate: arginine 106, asparagine 138, and arginine 169. An NAD(+)-binding site is contributed by asparagine 138. Catalysis depends on histidine 193, which acts as the Proton acceptor. Threonine 248 is a binding site for substrate. Serine 301 is modified (phosphoserine).

It belongs to the LDH/MDH superfamily. LDH family. As to quaternary structure, homotetramer. Interacts with RABL2/RABL2A; binds preferentially to GTP-bound RABL2.

The protein localises to the cytoplasm. It carries out the reaction (S)-lactate + NAD(+) = pyruvate + NADH + H(+). Its pathway is fermentation; pyruvate fermentation to lactate; (S)-lactate from pyruvate: step 1/1. In terms of biological role, possible role in sperm motility. The protein is L-lactate dehydrogenase C chain (LDHC) of Sus scrofa (Pig).